Consider the following 485-residue polypeptide: Cysteine--tRNA ligase (485 aa).

A Zn(2+)-binding site is contributed by C29. The 'HIGH' region signature appears at 31–41 (VTVYDHCHIGH). Zn(2+) is bound by residues C209, H234, and E238. Residues 266-270 (KMSKS) carry the 'KMSKS' region motif. An ATP-binding site is contributed by K269.

It belongs to the class-I aminoacyl-tRNA synthetase family. As to quaternary structure, monomer. Requires Zn(2+) as cofactor.

It localises to the cytoplasm. The enzyme catalyses tRNA(Cys) + L-cysteine + ATP = L-cysteinyl-tRNA(Cys) + AMP + diphosphate. This Geobacter metallireducens (strain ATCC 53774 / DSM 7210 / GS-15) protein is Cysteine--tRNA ligase.